We begin with the raw amino-acid sequence, 192 residues long: Orotate phosphoribosyltransferase (192 aa).

5-phospho-alpha-D-ribose 1-diphosphate is bound by residues Arg102, Lys103, Lys106, and 129-137; that span reads EDVVTTGRS. The orotate site is built by Thr133 and Arg161.

This sequence belongs to the purine/pyrimidine phosphoribosyltransferase family. PyrE subfamily. In terms of assembly, homodimer. It depends on Mg(2+) as a cofactor.

The enzyme catalyses orotidine 5'-phosphate + diphosphate = orotate + 5-phospho-alpha-D-ribose 1-diphosphate. It participates in pyrimidine metabolism; UMP biosynthesis via de novo pathway; UMP from orotate: step 1/2. In terms of biological role, catalyzes the transfer of a ribosyl phosphate group from 5-phosphoribose 1-diphosphate to orotate, leading to the formation of orotidine monophosphate (OMP). This is Orotate phosphoribosyltransferase from Prochlorococcus marinus (strain SARG / CCMP1375 / SS120).